A 700-amino-acid polypeptide reads, in one-letter code: Elongation factor G (700 aa).

The region spanning 13–288 is the tr-type G domain; that stretch reads SKIRNIGITA…AVIDYLPAPD (276 aa). Residues 22-29, 86-90, and 140-143 contribute to the GTP site; these read AHIDAGKT, DTPGH, and NKLD.

Belongs to the TRAFAC class translation factor GTPase superfamily. Classic translation factor GTPase family. EF-G/EF-2 subfamily.

It is found in the cytoplasm. Catalyzes the GTP-dependent ribosomal translocation step during translation elongation. During this step, the ribosome changes from the pre-translocational (PRE) to the post-translocational (POST) state as the newly formed A-site-bound peptidyl-tRNA and P-site-bound deacylated tRNA move to the P and E sites, respectively. Catalyzes the coordinated movement of the two tRNA molecules, the mRNA and conformational changes in the ribosome. The sequence is that of Elongation factor G from Gluconobacter oxydans (strain 621H) (Gluconobacter suboxydans).